We begin with the raw amino-acid sequence, 380 residues long: tRNA (guanine(26)-N(2))-dimethyltransferase (380 aa).

The 373-residue stretch at 2-374 folds into the Trm1 methyltransferase domain; the sequence is ITVNEGSVTI…AGIGEIEEVL (373 aa). Residues arginine 35, arginine 65, aspartate 83, aspartate 109, and alanine 110 each coordinate S-adenosyl-L-methionine. Zn(2+) is bound by residues cysteine 242, cysteine 245, cysteine 261, and cysteine 264.

It belongs to the class I-like SAM-binding methyltransferase superfamily. Trm1 family.

The enzyme catalyses guanosine(26) in tRNA + 2 S-adenosyl-L-methionine = N(2)-dimethylguanosine(26) in tRNA + 2 S-adenosyl-L-homocysteine + 2 H(+). Its function is as follows. Dimethylates a single guanine residue at position 26 of a number of tRNAs using S-adenosyl-L-methionine as donor of the methyl groups. The polypeptide is tRNA (guanine(26)-N(2))-dimethyltransferase (Methanothermobacter thermautotrophicus (strain ATCC 29096 / DSM 1053 / JCM 10044 / NBRC 100330 / Delta H) (Methanobacterium thermoautotrophicum)).